The chain runs to 312 residues: Ribosomal protein L11 methyltransferase (312 aa).

S-adenosyl-L-methionine-binding residues include Thr-163, Gly-184, Asp-206, and Asn-248.

It belongs to the methyltransferase superfamily. PrmA family.

Its subcellular location is the cytoplasm. It catalyses the reaction L-lysyl-[protein] + 3 S-adenosyl-L-methionine = N(6),N(6),N(6)-trimethyl-L-lysyl-[protein] + 3 S-adenosyl-L-homocysteine + 3 H(+). In terms of biological role, methylates ribosomal protein L11. The protein is Ribosomal protein L11 methyltransferase of Clostridium botulinum (strain Okra / Type B1).